We begin with the raw amino-acid sequence, 124 residues long: Large ribosomal subunit protein bL12 (124 aa).

The protein belongs to the bacterial ribosomal protein bL12 family. In terms of assembly, homodimer. Part of the ribosomal stalk of the 50S ribosomal subunit. Forms a multimeric L10(L12)X complex, where L10 forms an elongated spine to which 2 to 4 L12 dimers bind in a sequential fashion. Binds GTP-bound translation factors.

Its function is as follows. Forms part of the ribosomal stalk which helps the ribosome interact with GTP-bound translation factors. Is thus essential for accurate translation. In Burkholderia cenocepacia (strain HI2424), this protein is Large ribosomal subunit protein bL12.